The sequence spans 349 residues: GMP reductase (349 aa).

108 to 131 contributes to the NADP(+) binding site; it reads IDFLKIKKIFLLSSELKYICIDVA. K(+)-binding residues include G181 and G183. The Thioimidate intermediate role is filled by C186. 216 to 239 is a binding site for NADP(+); the sequence is IISDGGCTVSGDIAKAFGGGADFV.

This sequence belongs to the IMPDH/GMPR family. GuaC type 1 subfamily. Homotetramer.

It catalyses the reaction IMP + NH4(+) + NADP(+) = GMP + NADPH + 2 H(+). In terms of biological role, catalyzes the irreversible NADPH-dependent deamination of GMP to IMP. It functions in the conversion of nucleobase, nucleoside and nucleotide derivatives of G to A nucleotides, and in maintaining the intracellular balance of A and G nucleotides. This chain is GMP reductase, found in Buchnera aphidicola subsp. Acyrthosiphon pisum (strain Tuc7).